We begin with the raw amino-acid sequence, 354 residues long: Guanine nucleotide-binding protein G(o) subunit alpha (354 aa).

Residue Gly-2 is the site of N-myristoyl glycine attachment. Cys-3 carries S-palmitoyl cysteine lipidation. Positions 32 to 354 (KDIKLLLLGA…ANNLRGCGLY (323 aa)) constitute a G-alpha domain. Residues 35–48 (KLLLLGAGESGKST) are G1 motif. GTP-binding positions include 40–47 (GAGESGKS), 176–182 (LRTRVKT), 201–205 (DVGGQ), 270–273 (NKKD), and Ala-326. Ser-47 and Thr-182 together coordinate Mg(2+). The interval 174–182 (DILRTRVKT) is G2 motif. A G3 motif region spans residues 197 to 206 (FKLFDVGGQR). A G4 motif region spans residues 266 to 273 (ILFLNKKD). A G5 motif region spans residues 324-329 (TCATDT).

It belongs to the G-alpha family. G(i/o/t/z) subfamily. In terms of assembly, g proteins are composed of 3 units; alpha, beta and gamma. The alpha chain contains the guanine nucleotide binding site.

Its function is as follows. Guanine nucleotide-binding proteins (G proteins) are involved as modulators or transducers in various transmembrane signaling systems. The G(o) protein function is not clear. The polypeptide is Guanine nucleotide-binding protein G(o) subunit alpha (Planorbella trivolvis (Marsh rams-horn)).